Here is a 1086-residue protein sequence, read N- to C-terminus: NAD(P) transhydrogenase, mitochondrial (1086 aa).

The transit peptide at 1–43 (MANLLKTVVTGCSCPLLSNLGSCKGLRVKKDFLRTFYTHQELW) directs the protein to the mitochondrion. Residues 44–474 (CKAPVKPGIP…TITPFRKTMS (431 aa)) are Mitochondrial matrix-facing. K70 bears the N6-acetyllysine mark. K117 is modified (N6-succinyllysine). An NAD(+)-binding site is contributed by 182–184 (RVT). K224 carries the N6-succinyllysine modification. NAD(+)-binding positions include V237, 257–259 (DTR), and G287. The residue at position 294 (K294) is an N6-succinyllysine. E300 and L319 together coordinate NAD(+). K331 carries the post-translational modification N6-succinyllysine. An N6-acetyllysine modification is found at K397. A run of 4 helical transmembrane segments spans residues 475–493 (TASA…GIAA), 501–521 (MVTT…GVTP), 527–546 (LMSV…LALM), and 558–578 (GLAA…FLVT). The Mitochondrial matrix segment spans residues 579–595 (QRMLDMFKRPTDPPEYN). A run of 5 helical transmembrane segments spans residues 596 to 616 (YLYL…LYSG), 622 to 642 (IMYL…STQG), 646 to 666 (LGNA…LGVL), 672 to 691 (LLAQ…LTIA), and 702 to 722 (LVAA…IAEY). The Cytoplasmic segment spans residues 723 to 739 (IIEYPHFATDAAANLTK). Transmembrane regions (helical) follow at residues 740–760 (IVAY…LIAY), 778–797 (HLLN…PFMV), 801–819 (FTTG…AVMG), 833–853 (VVIT…GFLL), and 857–879 (LLTI…MCVA). Residues 880–1086 (MNRSLANVIL…QAKVRESYQK (207 aa)) are Mitochondrial matrix-facing. NADP(+) is bound by residues Y933, 965–970 (VAGRMP), 1007–1011 (GANDT), 1026–1027 (GM), 1042–1049 (KRSLGVGY), and 1068–1069 (DA). An N6-succinyllysine modification is found at K1079.

It in the N-terminal section; belongs to the AlaDH/PNT family. In the C-terminal section; belongs to the PNT beta subunit family. In terms of assembly, homodimer. Widely expressed with expression most readily detectable in adrenal, heart, kidney, thyroid and adipose tissues.

The protein localises to the mitochondrion inner membrane. It carries out the reaction NAD(+) + NADPH + H(+)(in) = NADH + NADP(+) + H(+)(out). The transhydrogenation between NADH and NADP is coupled to respiration and ATP hydrolysis and functions as a proton pump across the membrane. May play a role in reactive oxygen species (ROS) detoxification in the adrenal gland. This chain is NAD(P) transhydrogenase, mitochondrial (NNT), found in Homo sapiens (Human).